The following is a 349-amino-acid chain: MAGEEVKEIDEFEELGFEPATEETPKKKKKEKIIRSIEDLPGVGPATAEKLREAGYDTLEAIAVASPIELKEVAGISEGTALKIIQAARKAANLGTFMRADEYLKKRATIGRISTGSKSLDKLLGGGIETQAITEVFGEFGSGKTQLAHTLAVMVQLPPEEGGLNGSVIWIDTENTFRPERIREIAQNRGLDPDEVLKHIYVARAFNSNHQMLLVQQAEDKIKELLNTDRPVKLLIVDSLTSHFRSEYIGRGALAERQQKLAKHLADLHRLANLYDIAVFVTNQVQARPDAFFGDPTRPIGGHILAHSATLRVYLRKGKGGKRIARLIDAPHLPEGEAVFSITEKGIED.

The tract at residues 1 to 32 is disordered; it reads MAGEEVKEIDEFEELGFEPATEETPKKKKKEK. The segment covering 7–16 has biased composition (acidic residues); the sequence is KEIDEFEELG. Residue 138-145 coordinates ATP; sequence GEFGSGKT.

The protein belongs to the eukaryotic RecA-like protein family.

In terms of biological role, involved in DNA repair and in homologous recombination. Binds and assemble on single-stranded DNA to form a nucleoprotein filament. Hydrolyzes ATP in a ssDNA-dependent manner and promotes DNA strand exchange between homologous DNA molecules. This is DNA repair and recombination protein RadA (radA) from Pyrococcus furiosus (strain ATCC 43587 / DSM 3638 / JCM 8422 / Vc1).